The following is a 282-amino-acid chain: Putative hydrolase BamMC406_5393 (282 aa).

3 residues coordinate Mg(2+): glutamate 124, glutamate 126, and aspartate 155.

The protein belongs to the FAH family. It depends on Mg(2+) as a cofactor.

This Burkholderia ambifaria (strain MC40-6) protein is Putative hydrolase BamMC406_5393.